We begin with the raw amino-acid sequence, 43 residues long: Defensin-B (43 aa).

Intrachain disulfides connect C3-C34, C20-C39, and C24-C41.

Its subcellular location is the secreted. Antibacterial protein. Strong activity against the Gram-positive bacteria M.luteus, B.megaterium and S.aureus. Reduced activity against Gram-positive bacterium B.subtilis and weak activity against Gram-negative bacterium X.japonicus. No detectable activity against the Gram-negative bacteria E.asbriae, E.coli, P.aeruginosa and S.marcescens. This Anomala cuprea (Cupreous chafer beetle) protein is Defensin-B.